The chain runs to 181 residues: ATP-dependent protease subunit HslV (181 aa).

The active site involves Thr7. Residues Gly166, Cys169, and Thr172 each contribute to the Na(+) site.

The protein belongs to the peptidase T1B family. HslV subfamily. In terms of assembly, a double ring-shaped homohexamer of HslV is capped on each side by a ring-shaped HslU homohexamer. The assembly of the HslU/HslV complex is dependent on binding of ATP.

The protein localises to the cytoplasm. It catalyses the reaction ATP-dependent cleavage of peptide bonds with broad specificity.. Allosterically activated by HslU binding. Functionally, protease subunit of a proteasome-like degradation complex believed to be a general protein degrading machinery. The protein is ATP-dependent protease subunit HslV of Acidovorax ebreus (strain TPSY) (Diaphorobacter sp. (strain TPSY)).